The primary structure comprises 448 residues: MREVLSIHIGQAGIQVGNACWELYCLEHGINPDGSIIQDFNKKKNDDAFSTFFSETSTGKRVPRCVFLDLESGVIDEVKNGRYKNLYHPEQLICGNEDAANNYARGHYTIGKEIIEIALDRIRKLVENCSGLQGFLIFNSVGGGTGSGLGSLLLERLSLDYGKKSKLGFTVYPSPQVSTAVVEPYNSVLATHSLLEHTDVAVVLDNEAIYEICQRSLNIERPTYTNLNRLIAQVISSITASLRFDGALNVDITEFQTNLVPYPRIHFMLSSLAPVISLEMANHEQYSTAEITNAAFEPNSMMAKCDPRRGKYMACCLMFRGDVAPKDVNGSVAAIKTKKTIQFVDWCPTGFKCGINYQPPTVVPDGDLAKVDRAVCMISNSTAISEVFSRINKKFDLMYSKRAFVHWYVGEGMEEGEFNEAREDMAALEKDYEEVGSESQDLISNSFF.

Gln11, Glu71, Ser140, Gly144, Thr145, Thr179, Asn206, and Asn228 together coordinate GTP. Glu71 contacts Mg(2+). Glu254 is a catalytic residue.

This sequence belongs to the tubulin family. Dimer of alpha and beta chains. A typical microtubule is a hollow water-filled tube with an outer diameter of 25 nm and an inner diameter of 15 nM. Alpha-beta heterodimers associate head-to-tail to form protofilaments running lengthwise along the microtubule wall with the beta-tubulin subunit facing the microtubule plus end conferring a structural polarity. Microtubules usually have 13 protofilaments but different protofilament numbers can be found in some organisms and specialized cells. It depends on Mg(2+) as a cofactor.

It catalyses the reaction GTP + H2O = GDP + phosphate + H(+). Tubulin is the major constituent of microtubules, a cylinder consisting of laterally associated linear protofilaments composed of alpha- and beta-tubulin heterodimers. Microtubules grow by the addition of GTP-tubulin dimers to the microtubule end, where a stabilizing cap forms. Below the cap, tubulin dimers are in GDP-bound state, owing to GTPase activity of alpha-tubulin. This chain is Tubulin alpha chain, nucleomorph (tubA), found in Guillardia theta (Cryptophyte).